The following is a 698-amino-acid chain: Zinc finger CCCH domain-containing protein 7 (698 aa).

Pro residues predominate over residues 1-11 (MEEPSPVPPAA). 4 disordered regions span residues 1–23 (MEEPSPVPPAAAPASLAAAPPTT), 56–95 (HAARPDAEVEPAAAAAIPPGGSGGLPHGDSPPPADVGGDR), 109–137 (APHETPSTSASPDAAVNPTTDPGVVPQGT), and 272–300 (GSLDGGGGFEEGEIEGDTQNLDADDSGNS). Low complexity-rich tracts occupy residues 12 to 21 (APASLAAAPP) and 65 to 74 (EPAAAAAIPP). The span at 281-300 (EEGEIEGDTQNLDADDSGNS) shows a compositional bias: acidic residues. 3 consecutive C3H1-type zinc fingers follow at residues 429–456 (PKVVKVCHFYLHGKCQQGNLCKFSHDTT), 458–485 (LTKSKPCTHYARGSCLKGDDCPYDHELS), and 486–511 (KYPCHNFMENGMCIRGDKCKFSHVIP). Disordered stretches follow at residues 512–553 (TAEG…GEPA) and 607–682 (TEKH…QHEV). Composition is skewed to polar residues over residues 535-548 (CQEQTSRQKTSTVY) and 665-680 (SLPTTAAVPSSVSTQH).

In Oryza sativa subsp. japonica (Rice), this protein is Zinc finger CCCH domain-containing protein 7.